The chain runs to 259 residues: Probable dihydroorotate dehydrogenase B (NAD(+)), electron transfer subunit (259 aa).

Residues 1 to 89 (MLPLNATIVQ…RGPFGKGFSL (89 aa)) enclose the FAD-binding FR-type domain. Residues C211, C216, C219, and C229 each contribute to the [2Fe-2S] cluster site.

Belongs to the PyrK family. Heterotetramer of 2 PyrK and 2 PyrD type B subunits. Requires [2Fe-2S] cluster as cofactor. FAD is required as a cofactor.

It functions in the pathway pyrimidine metabolism; UMP biosynthesis via de novo pathway; orotate from (S)-dihydroorotate (NAD(+) route): step 1/1. Responsible for channeling the electrons from the oxidation of dihydroorotate from the FMN redox center in the PyrD type B subunit to the ultimate electron acceptor NAD(+). The sequence is that of Probable dihydroorotate dehydrogenase B (NAD(+)), electron transfer subunit from Methanosarcina barkeri (strain Fusaro / DSM 804).